The primary structure comprises 209 residues: Large ribosomal subunit protein uL3 (209 aa).

N5-methylglutamine is present on Gln150.

It belongs to the universal ribosomal protein uL3 family. As to quaternary structure, part of the 50S ribosomal subunit. Forms a cluster with proteins L14 and L19. Post-translationally, methylated by PrmB.

Functionally, one of the primary rRNA binding proteins, it binds directly near the 3'-end of the 23S rRNA, where it nucleates assembly of the 50S subunit. The polypeptide is Large ribosomal subunit protein uL3 (Vibrio cholerae serotype O1 (strain ATCC 39541 / Classical Ogawa 395 / O395)).